Consider the following 474-residue polypeptide: tRNA-2-methylthio-N(6)-dimethylallyladenosine synthase (474 aa).

The region spanning 3-120 (KKLHIKTWGC…LPEMINHVQG (118 aa)) is the MTTase N-terminal domain. Residues cysteine 12, cysteine 49, cysteine 83, cysteine 157, cysteine 161, and cysteine 164 each contribute to the [4Fe-4S] cluster site. Residues 143-375 (RADGPTAFVS…QDRITKQAMR (233 aa)) enclose the Radical SAM core domain. In terms of domain architecture, TRAM spans 378–441 (RLMLGTVQRI…TNSLRGIVVR (64 aa)).

Belongs to the methylthiotransferase family. MiaB subfamily. Monomer. [4Fe-4S] cluster is required as a cofactor.

The protein resides in the cytoplasm. The enzyme catalyses N(6)-dimethylallyladenosine(37) in tRNA + (sulfur carrier)-SH + AH2 + 2 S-adenosyl-L-methionine = 2-methylsulfanyl-N(6)-dimethylallyladenosine(37) in tRNA + (sulfur carrier)-H + 5'-deoxyadenosine + L-methionine + A + S-adenosyl-L-homocysteine + 2 H(+). In terms of biological role, catalyzes the methylthiolation of N6-(dimethylallyl)adenosine (i(6)A), leading to the formation of 2-methylthio-N6-(dimethylallyl)adenosine (ms(2)i(6)A) at position 37 in tRNAs that read codons beginning with uridine. This is tRNA-2-methylthio-N(6)-dimethylallyladenosine synthase from Pectobacterium atrosepticum (strain SCRI 1043 / ATCC BAA-672) (Erwinia carotovora subsp. atroseptica).